Here is a 493-residue protein sequence, read N- to C-terminus: UDP-N-acetylmuramoyl-L-alanyl-D-glutamate--2,6-diaminopimelate ligase (493 aa).

2 residues coordinate UDP-N-acetyl-alpha-D-muramoyl-L-alanyl-D-glutamate: leucine 30 and serine 32. ATP is bound at residue 117–123; that stretch reads GTNGKTT. UDP-N-acetyl-alpha-D-muramoyl-L-alanyl-D-glutamate is bound by residues asparagine 158, 159–160, serine 186, glutamine 192, and arginine 194; that span reads TT. Lysine 226 is modified (N6-carboxylysine). Meso-2,6-diaminopimelate is bound by residues arginine 388, 412–415, glycine 463, and glutamate 467; that span reads DNPR. The Meso-diaminopimelate recognition motif motif lies at 412–415; that stretch reads DNPR.

The protein belongs to the MurCDEF family. MurE subfamily. Mg(2+) is required as a cofactor. Carboxylation is probably crucial for Mg(2+) binding and, consequently, for the gamma-phosphate positioning of ATP.

It is found in the cytoplasm. It catalyses the reaction UDP-N-acetyl-alpha-D-muramoyl-L-alanyl-D-glutamate + meso-2,6-diaminopimelate + ATP = UDP-N-acetyl-alpha-D-muramoyl-L-alanyl-gamma-D-glutamyl-meso-2,6-diaminopimelate + ADP + phosphate + H(+). The protein operates within cell wall biogenesis; peptidoglycan biosynthesis. Catalyzes the addition of meso-diaminopimelic acid to the nucleotide precursor UDP-N-acetylmuramoyl-L-alanyl-D-glutamate (UMAG) in the biosynthesis of bacterial cell-wall peptidoglycan. In Vibrio parahaemolyticus serotype O3:K6 (strain RIMD 2210633), this protein is UDP-N-acetylmuramoyl-L-alanyl-D-glutamate--2,6-diaminopimelate ligase.